Consider the following 287-residue polypeptide: Protoheme IX farnesyltransferase (287 aa).

7 helical membrane-spanning segments follow: residues 19-39 (LMVAGATFFGAMLAVPHVTIT), 100-120 (MVLCLAGGLTSLLVGIGIVAV), 134-154 (FALLVGAAAGAMPPVVGWLAV), 162-182 (MLVVVYTLYLLWQIPHFWLHA), 212-232 (VWFHAYAVAVLMVPAFPLLEW), 233-253 (VGMRIMVTLCGIALLFAAMLA), and 267-287 (VLCAVMVVLLIDRLAIPVSLF).

The protein belongs to the UbiA prenyltransferase family. Protoheme IX farnesyltransferase subfamily.

The protein localises to the cell inner membrane. It carries out the reaction heme b + (2E,6E)-farnesyl diphosphate + H2O = Fe(II)-heme o + diphosphate. Its pathway is porphyrin-containing compound metabolism; heme O biosynthesis; heme O from protoheme: step 1/1. In terms of biological role, converts heme B (protoheme IX) to heme O by substitution of the vinyl group on carbon 2 of heme B porphyrin ring with a hydroxyethyl farnesyl side group. The polypeptide is Protoheme IX farnesyltransferase (Nitratidesulfovibrio vulgaris (strain ATCC 29579 / DSM 644 / CCUG 34227 / NCIMB 8303 / VKM B-1760 / Hildenborough) (Desulfovibrio vulgaris)).